Reading from the N-terminus, the 150-residue chain is Putative biopolymer transport protein ExbB-like 2 (150 aa).

Transmembrane regions (helical) follow at residues 5 to 25, 63 to 83, and 97 to 117; these read VDYG…AIAI, APYI…MDLG, and LALA…AIVI.

Belongs to the ExbB/TolQ family.

The protein resides in the cell inner membrane. The chain is Putative biopolymer transport protein ExbB-like 2 from Helicobacter pylori (strain ATCC 700392 / 26695) (Campylobacter pylori).